Consider the following 301-residue polypeptide: Cytosolic sulfotransferase 3 (301 aa).

A 3'-phosphoadenylyl sulfate-binding site is contributed by 53–58 (KAGTTW). Residue His-115 is the Proton acceptor of the active site. 3'-phosphoadenylyl sulfate-binding positions include Arg-137, Ser-145, Tyr-201, 235–240 (VQFDAM), and 263–265 (RKG).

The protein belongs to the sulfotransferase 1 family.

The protein localises to the cytoplasm. With respect to regulation, inhibited by Hg(2+), Co(2+), Zn(2+), Cd(2+), Cu(2+) and Pb(2+) ions. Activated slightly by Mn(2+), Ca(2+) and Mg(2+) ions. In terms of biological role, sulfotransferase that utilizes 3'-phospho-5'-adenylyl sulfate (PAPS) as sulfonate donor to catalyze the sulfate conjugation of a variety of xenobiotic and endogenous compounds, including dopamine, T3 (triiodo-L-thyronine), T4 (thyroxine), estrone, DHEA (dehydroepiandrosterone), flavonoids, isoflavonoids and other phenolic compounds. The protein is Cytosolic sulfotransferase 3 of Danio rerio (Zebrafish).